The primary structure comprises 887 residues: Probable dual specificity protein kinase madd-3 (887 aa).

Disordered stretches follow at residues 77–147 (PIKS…ISAA), 163–299 (AQPP…PKAL), 313–333 (LPQS…STGG), 347–475 (TTIC…KSAA), and 504–533 (RKPS…QHQD). Positions 108–118 (PTQNPVQLPLP) are enriched in low complexity. A compositionally biased stretch (basic and acidic residues) spans 121 to 130 (VSEKPGDKKS). Positions 177–192 (SETNSGSGPVSKQVSG) are enriched in polar residues. Positions 217 to 241 (SSASTRAKAASAVAPEANPAPVPTA) are enriched in low complexity. 2 stretches are compositionally biased toward polar residues: residues 314 to 332 (PQSS…TSTG) and 356 to 366 (NVPSTSQPQQG). Residues 367-377 (DNEKRLIEKKL) show a composition bias toward basic and acidic residues. Residues 407–419 (LSSNLTTTNNNNN) are compositionally biased toward low complexity. Residues 439-462 (FSTQAGSGNATTVDDPASTTTSKE) show a composition bias toward polar residues. The region spanning 551–863 (FTIYDTLGEG…LPEALQHRYF (313 aa)) is the Protein kinase domain. Residues 557–565 (LGEGTFGKV) and lysine 580 contribute to the ATP site. Aspartate 677 (proton acceptor) is an active-site residue.

It belongs to the protein kinase superfamily. CMGC Ser/Thr protein kinase family. Lammer subfamily. In terms of tissue distribution, expressed in body wall, vulval and anal depressor muscles.

The protein resides in the cytoplasm. It is found in the nucleus. Probable dual specificity kinase acting on both serine/threonine and tyrosine-containing substrates. Negatively regulates p38 MAPK signaling to allow for the plasma membrane of body wall muscle cells to form projections, also called muscle arms, that extend and connect the body wall muscles to target motor neurons. Negative regulation of p38 MAPK signaling may in turn modulate the trafficking of the muscle specific receptor eva-1 to the lysosome, to ensure proper display of the eva-1 receptor on the plasma membrane of muscle cells and allow for muscle arm extension towards guidance cues. The chain is Probable dual specificity protein kinase madd-3 from Caenorhabditis elegans.